A 271-amino-acid polypeptide reads, in one-letter code: Ribosomal RNA small subunit methyltransferase A (271 aa).

The S-adenosyl-L-methionine site is built by Asn28, Leu30, Gly54, Glu75, Asp99, and Asn117.

The protein belongs to the class I-like SAM-binding methyltransferase superfamily. rRNA adenine N(6)-methyltransferase family. RsmA subfamily.

It is found in the cytoplasm. It carries out the reaction adenosine(1518)/adenosine(1519) in 16S rRNA + 4 S-adenosyl-L-methionine = N(6)-dimethyladenosine(1518)/N(6)-dimethyladenosine(1519) in 16S rRNA + 4 S-adenosyl-L-homocysteine + 4 H(+). Functionally, specifically dimethylates two adjacent adenosines (A1518 and A1519) in the loop of a conserved hairpin near the 3'-end of 16S rRNA in the 30S particle. May play a critical role in biogenesis of 30S subunits. The protein is Ribosomal RNA small subunit methyltransferase A of Thermus thermophilus (strain ATCC 27634 / DSM 579 / HB8).